We begin with the raw amino-acid sequence, 400 residues long: 3-phenylpropionate/cinnamic acid dioxygenase ferredoxin--NAD(+) reductase component (400 aa).

5-36 (TIIIVGGGQAAAMAAASLRQQGFTGELHLFSD) serves as a coordination point for FAD. An NAD(+)-binding site is contributed by 146–174 (SVVIVGAGTIGLELAASATQRRCKVTVIE).

Belongs to the bacterial ring-hydroxylating dioxygenase ferredoxin reductase family. This dioxygenase system consists of four proteins: the two subunits of the hydroxylase component (HcaE and HcaF), a ferredoxin (HcaC) and a ferredoxin reductase (HcaD). Requires FAD as cofactor.

It catalyses the reaction 2 reduced [2Fe-2S]-[ferredoxin] + NAD(+) + H(+) = 2 oxidized [2Fe-2S]-[ferredoxin] + NADH. Its pathway is aromatic compound metabolism; 3-phenylpropanoate degradation. Its function is as follows. Part of the multicomponent 3-phenylpropionate dioxygenase, that converts 3-phenylpropionic acid (PP) and cinnamic acid (CI) into 3-phenylpropionate-dihydrodiol (PP-dihydrodiol) and cinnamic acid-dihydrodiol (CI-dihydrodiol), respectively. This chain is 3-phenylpropionate/cinnamic acid dioxygenase ferredoxin--NAD(+) reductase component, found in Escherichia coli (strain 55989 / EAEC).